We begin with the raw amino-acid sequence, 563 residues long: MRFNAAITGALVSSATLMGQAHAEETEKKADATSLVEKPTFTPTTIEAPFLEQFTADWDSRWTPSHAKKEDSKSEEDWAYVGEWAVEEPTVLNGMVGDKGLVVKNVAAHHAISAKFPKKIDNKGKTLVVQYEVKPQNSLVCGGAYMKLLQENKKLHAEEFSNATPYVIMFGPDKCGATNKVHFIFRHKNPKTGEYEEKHMTAPPAARTTKLTTLYTLIVKPDQSFQILIDGEAVKNGTLLEDFAPPVNPEKEIDDPKDKKPADWVDEAKIPDPEAKKPDDWDEDAPYEIVDEEATMPEDWLEDEPTSIPDPEAEKPEDWDDEEDGDWIPPTVPNPKCNEVSGCGPWTPPMKKNPAYKGKWTAPLIDNPAYKGIWKPRKIPNPAYFEDKTPSNFEPMGAVGFEIWTMQNDILFDNIYIGHSIEDAEKLRKETFDLKHPVEVALEEASKPKLEEKAATPSVSFKEAPVTYVREKVDYFVGLAKQDPINAVKQVPEVAGGLGALLLTMILVIVGAVGASSPAPAAAAKKGKEAASAAKEKASEAVSSAADTAKGAATKRNTRSSAQ.

The first 23 residues, 1–23, serve as a signal peptide directing secretion; that stretch reads MRFNAAITGALVSSATLMGQAHA. The Lumenal portion of the chain corresponds to 24-493; it reads EETEKKADAT…PINAVKQVPE (470 aa). Asp-98 serves as a coordination point for Ca(2+). An intrachain disulfide couples Cys-141 to Cys-175. Tyr-145, Lys-147, Tyr-166, and Asp-173 together coordinate an alpha-D-glucoside. Asn-236 carries an N-linked (GlcNAc...) asparagine glycan. A disordered region spans residues 241–323; that stretch reads EDFAPPVNPE…EKPEDWDDEE (83 aa). A compositionally biased stretch (basic and acidic residues) spans 249–279; sequence PEKEIDDPKDKKPADWVDEAKIPDPEAKKPD. The p domain (Extended arm) stretch occupies residues 253-386; it reads IDDPKDKKPA…RKIPNPAYFE (134 aa). A compositionally biased stretch (acidic residues) spans 280–305; it reads DWDEDAPYEIVDEEATMPEDWLEDEP. The cysteines at positions 337 and 343 are disulfide-linked. An alpha-D-glucoside is bound at residue Glu-402. Asp-413 contacts Ca(2+). A helical membrane pass occupies residues 494 to 514; sequence VAGGLGALLLTMILVIVGAVG. Topologically, residues 515 to 563 are cytoplasmic; it reads ASSPAPAAAAKKGKEAASAAKEKASEAVSSAADTAKGAATKRNTRSSAQ. Residues 521-563 are disordered; that stretch reads AAAAKKGKEAASAAKEKASEAVSSAADTAKGAATKRNTRSSAQ. A compositionally biased stretch (basic and acidic residues) spans 526–539; sequence KGKEAASAAKEKAS.

The protein belongs to the calreticulin family.

It localises to the endoplasmic reticulum membrane. Interacts with newly synthesized monoglucosylated glycoproteins in the endoplasmic reticulum. It may act in assisting protein assembly and/or in the retention within the ER of unassembled protein subunits. It seems to play a major role in the quality control apparatus of the ER by the retention of incorrectly folded proteins. In Aspergillus fumigatus (strain ATCC MYA-4609 / CBS 101355 / FGSC A1100 / Af293) (Neosartorya fumigata), this protein is Calnexin homolog.